The chain runs to 126 residues: BPTI/Kunitz domain-containing protein (126 aa).

BPTI/Kunitz inhibitor domains lie at 14-64 and 70-120; these read CQLP…RRRC and CSLP…RFQC. Disulfide bonds link C14–C64, C23–C47, C39–C60, C70–C120, C79–C103, and C95–C116.

In terms of tissue distribution, component of the acid-soluble and acid-insoluble organic matrix of calcified shell layers (at protein level).

It is found in the secreted. Its function is as follows. Serine protease inhibitor. The sequence is that of BPTI/Kunitz domain-containing protein from Haliotis asinina (Donkey's ear abalone).